Consider the following 295-residue polypeptide: 33 kDa chaperonin (295 aa).

Disulfide bonds link C233–C235 and C267–C270.

Belongs to the HSP33 family. In terms of processing, under oxidizing conditions two disulfide bonds are formed involving the reactive cysteines. Under reducing conditions zinc is bound to the reactive cysteines and the protein is inactive.

Its subcellular location is the cytoplasm. Functionally, redox regulated molecular chaperone. Protects both thermally unfolding and oxidatively damaged proteins from irreversible aggregation. Plays an important role in the bacterial defense system toward oxidative stress. This Mannheimia succiniciproducens (strain KCTC 0769BP / MBEL55E) protein is 33 kDa chaperonin.